A 348-amino-acid polypeptide reads, in one-letter code: Sex-lethal homolog (348 aa).

RRM domains lie at 110 to 188 (TNLI…YARP) and 196 to 276 (TNLY…LAEE). Positions 296–310 (GGGGGGGGGGGGGMG) are enriched in gly residues. Residues 296–317 (GGGGGGGGGGGGGMGGPPPPPM) are disordered.

It is found in the nucleus. Unknown; apparently not involved in somatic sex determination. This chain is Sex-lethal homolog (SXL), found in Ceratitis capitata (Mediterranean fruit fly).